The chain runs to 428 residues: Serine--tRNA ligase (428 aa).

235–237 (TAE) is an L-serine binding site. 266–268 (RSE) is an ATP binding site. An L-serine-binding site is contributed by Glu289. 353–356 (EISS) contributes to the ATP binding site. L-serine is bound at residue Ser389.

The protein belongs to the class-II aminoacyl-tRNA synthetase family. Type-1 seryl-tRNA synthetase subfamily. Homodimer. The tRNA molecule binds across the dimer.

It is found in the cytoplasm. The enzyme catalyses tRNA(Ser) + L-serine + ATP = L-seryl-tRNA(Ser) + AMP + diphosphate + H(+). It carries out the reaction tRNA(Sec) + L-serine + ATP = L-seryl-tRNA(Sec) + AMP + diphosphate + H(+). It participates in aminoacyl-tRNA biosynthesis; selenocysteinyl-tRNA(Sec) biosynthesis; L-seryl-tRNA(Sec) from L-serine and tRNA(Sec): step 1/1. Catalyzes the attachment of serine to tRNA(Ser). Is also able to aminoacylate tRNA(Sec) with serine, to form the misacylated tRNA L-seryl-tRNA(Sec), which will be further converted into selenocysteinyl-tRNA(Sec). The polypeptide is Serine--tRNA ligase (Shewanella sediminis (strain HAW-EB3)).